The sequence spans 143 residues: Large ribosomal subunit protein uL13 (143 aa).

Belongs to the universal ribosomal protein uL13 family. As to quaternary structure, part of the 50S ribosomal subunit.

Its function is as follows. This protein is one of the early assembly proteins of the 50S ribosomal subunit, although it is not seen to bind rRNA by itself. It is important during the early stages of 50S assembly. This Solibacter usitatus (strain Ellin6076) protein is Large ribosomal subunit protein uL13.